A 316-amino-acid chain; its full sequence is Probable 5-dehydro-4-deoxyglucarate dehydratase 1 (316 aa).

The protein belongs to the DapA family.

It catalyses the reaction 5-dehydro-4-deoxy-D-glucarate + H(+) = 2,5-dioxopentanoate + CO2 + H2O. The protein operates within carbohydrate acid metabolism; D-glucarate degradation; 2,5-dioxopentanoate from D-glucarate: step 2/2. This Streptomyces coelicolor (strain ATCC BAA-471 / A3(2) / M145) protein is Probable 5-dehydro-4-deoxyglucarate dehydratase 1.